Here is a 267-residue protein sequence, read N- to C-terminus: Sorbitol-6-phosphate 2-dehydrogenase (267 aa).

9–38 (DNVIIVTGGASGIGLAIVDELLSQGAHVQM) is an NAD(+) binding site. Position 147 (Ser-147) interacts with substrate. The active-site Proton acceptor is the Tyr-160.

It belongs to the short-chain dehydrogenases/reductases (SDR) family. In terms of assembly, homotetramer.

The catalysed reaction is D-sorbitol 6-phosphate + NAD(+) = beta-D-fructose 6-phosphate + NADH + H(+). The protein operates within carbohydrate metabolism; D-sorbitol degradation; D-fructose 6-phosphate from D-sorbitol 6-phosphate: step 1/1. This Klebsiella pneumoniae protein is Sorbitol-6-phosphate 2-dehydrogenase (sorD).